We begin with the raw amino-acid sequence, 538 residues long: Solute carrier family 2, facilitated glucose transporter member 9 (538 aa).

The Cytoplasmic portion of the chain corresponds to 1-34 (MDSRELALASLMCDTGGPGELSVGHQQRRTKKWS). At S3 the chain carries Phosphoserine. Residues 35–54 (FSLVVAALVGAFGSSFLYGY) form a helical membrane-spanning segment. 2 N-linked (GlcNAc...) asparagine glycosylation sites follow: N55 and N71. Residues 55-88 (NLSVVNAPTPYIKAFYNGTWYRRHGQPIDPDTLT) are Extracellular-facing. The chain crosses the membrane as a helical span at residues 89 to 109 (LLWSVTVSIFAIGGLVGTLMV). Over 110 to 120 (KMIGKFLGRKS) the chain is Cytoplasmic. A helical membrane pass occupies residues 121–143 (TLLVNNGFAISAALLMACSLRAG). Residues 144-148 (TFEML) are Extracellular-facing. The helical transmembrane segment at 149 to 170 (IVGRFIMGVDGGIALSALPMYL) threads the bilayer. The Cytoplasmic segment spans residues 171 to 181 (NEISPKEIRGS). The helical transmembrane segment at 182-200 (LGQVTAIFICIGVFSGQLL) threads the bilayer. The Extracellular segment spans residues 201–211 (GLPELLGREST). Residues 212–233 (WPYLFGVIIVPALVQLASLPFL) form a helical membrane-spanning segment. Residues 234-297 (PESPRYLLFE…LLRAPFVRWQ (64 aa)) lie on the Cytoplasmic side of the membrane. A helical membrane pass occupies residues 298–319 (VITVIITMASYQLCGLNAIWFY). Residues 320–333 (TNSIFGKAGIPQDK) are Extracellular-facing. The chain crosses the membrane as a helical span at residues 334-356 (IPYITLSTGGIETLAAIFSGLVI). Over 357–362 (ERLGRR) the chain is Cytoplasmic. A helical transmembrane segment spans residues 363-385 (PLLIGGFGLMALFFGTLTATLTL). At 386 to 390 (QDQAP) the chain is on the extracellular side. The chain crosses the membrane as a helical span at residues 391 to 418 (WVPYLSIVCILAIIASFCSGPGGIPFIL). The Cytoplasmic segment spans residues 419 to 429 (TGEFFQQSERP). A helical membrane pass occupies residues 430–453 (AAFMIAGTVNWLSNFAVGLLFPFI). The Extracellular segment spans residues 454-458 (QKSLD). A helical membrane pass occupies residues 459–480 (SYCFLVFATICIAGATYFYFVL). At 481-538 (PETKNRTHAEISQAFAKRNKAQPPEVKADSAMTEEKANSQTEPDSSSTLDSYGQNKIV) the chain is on the cytoplasmic side. The tract at residues 495–538 (FAKRNKAQPPEVKADSAMTEEKANSQTEPDSSSTLDSYGQNKIV) is disordered. The segment covering 518 to 538 (NSQTEPDSSSTLDSYGQNKIV) has biased composition (polar residues).

Belongs to the major facilitator superfamily. Sugar transporter (TC 2.A.1.1) family. Post-translationally, N-glycosylated. Highly expressed in the intestine, with high expression in the jejunum and ileum, the segments of the intestine that perform the majority of urate excretion. Isoform 1: Widely expressed. Isoform 1: In kidney, expressed at low levels in proximal tubules. Isoform 2: Primarily expressed in liver and kidney; with specific expression in distal convoluted and connecting tubules of kidney.

It localises to the basolateral cell membrane. The protein resides in the apical cell membrane. It catalyses the reaction urate(out) = urate(in). High-capacity urate transporter, which may play a role in the urate reabsorption by proximal tubules. May have a residual high-affinity, low-capacity glucose and fructose transporter activity. Transports urate at rates 45- to 60-fold faster than glucose. Does not transport galactose. May mediate small uptake of adenine but not of other nucleobases. This chain is Solute carrier family 2, facilitated glucose transporter member 9, found in Mus musculus (Mouse).